A 311-amino-acid chain; its full sequence is GTPase Era (311 aa).

The Era-type G domain maps to arginine 18–asparagine 185. The tract at residues glycine 26–serine 33 is G1. Glycine 26–serine 33 is a binding site for GTP. The interval glutamine 52 to alanine 56 is G2. The interval aspartate 73–glycine 76 is G3. Residues aspartate 73–isoleucine 77 and asparagine 135–aspartate 138 each bind GTP. The tract at residues asparagine 135 to aspartate 138 is G4. A G5 region spans residues isoleucine 164–alanine 166. The region spanning leucine 216 to glutamate 293 is the KH type-2 domain.

It belongs to the TRAFAC class TrmE-Era-EngA-EngB-Septin-like GTPase superfamily. Era GTPase family. As to quaternary structure, monomer.

The protein localises to the cytoplasm. The protein resides in the cell inner membrane. Functionally, an essential GTPase that binds both GDP and GTP, with rapid nucleotide exchange. Plays a role in 16S rRNA processing and 30S ribosomal subunit biogenesis and possibly also in cell cycle regulation and energy metabolism. This Brucella melitensis biotype 1 (strain ATCC 23456 / CCUG 17765 / NCTC 10094 / 16M) protein is GTPase Era.